A 231-amino-acid chain; its full sequence is 5'-methylthioadenosine/S-adenosylhomocysteine nucleosidase (231 aa).

The active-site Proton acceptor is the E12. Substrate contacts are provided by residues G78, M153, and 174 to 175; that span reads ME. D198 acts as the Proton donor in catalysis.

This sequence belongs to the PNP/UDP phosphorylase family. MtnN subfamily.

The enzyme catalyses S-adenosyl-L-homocysteine + H2O = S-(5-deoxy-D-ribos-5-yl)-L-homocysteine + adenine. The catalysed reaction is S-methyl-5'-thioadenosine + H2O = 5-(methylsulfanyl)-D-ribose + adenine. It carries out the reaction 5'-deoxyadenosine + H2O = 5-deoxy-D-ribose + adenine. It participates in amino-acid biosynthesis; L-methionine biosynthesis via salvage pathway; S-methyl-5-thio-alpha-D-ribose 1-phosphate from S-methyl-5'-thioadenosine (hydrolase route): step 1/2. Its function is as follows. Catalyzes the irreversible cleavage of the glycosidic bond in both 5'-methylthioadenosine (MTA) and S-adenosylhomocysteine (SAH/AdoHcy) to adenine and the corresponding thioribose, 5'-methylthioribose and S-ribosylhomocysteine, respectively. Also cleaves 5'-deoxyadenosine, a toxic by-product of radical S-adenosylmethionine (SAM) enzymes, into 5-deoxyribose and adenine. The chain is 5'-methylthioadenosine/S-adenosylhomocysteine nucleosidase from Bacillus anthracis (strain A0248).